We begin with the raw amino-acid sequence, 419 residues long: Gamma-glutamyl phosphate reductase (419 aa).

The protein belongs to the gamma-glutamyl phosphate reductase family.

The protein resides in the cytoplasm. The enzyme catalyses L-glutamate 5-semialdehyde + phosphate + NADP(+) = L-glutamyl 5-phosphate + NADPH + H(+). It functions in the pathway amino-acid biosynthesis; L-proline biosynthesis; L-glutamate 5-semialdehyde from L-glutamate: step 2/2. In terms of biological role, catalyzes the NADPH-dependent reduction of L-glutamate 5-phosphate into L-glutamate 5-semialdehyde and phosphate. The product spontaneously undergoes cyclization to form 1-pyrroline-5-carboxylate. The sequence is that of Gamma-glutamyl phosphate reductase from Bordetella parapertussis (strain 12822 / ATCC BAA-587 / NCTC 13253).